Consider the following 163-residue polypeptide: MMPGQIPDPSVTAGSLPGLGPLTGLPSSALTTEELKYADIRNIGAMIAPLHFLEVKLGKRPQPVKSELDEEEERRKRRREKNKVAAARCRNKKKERTEFLQRESERLELMNAELKTQIEELKLERQQLILMLNRHRPTCIVRTDSVRTPESEGNPLLEQLDKK.

Disordered regions lie at residues 1-20 (MMPG…PGLG) and 59-89 (KRPQ…AARC). Residue K65 forms a Glycyl lysine isopeptide (Lys-Gly) (interchain with G-Cter in SUMO2) linkage. The 64-residue stretch at 72 to 135 (EERRKRRREK…QQLILMLNRH (64 aa)) folds into the bZIP domain. Residues 74–96 (RRKRRREKNKVAAARCRNKKKER) are basic motif. Residues 100–128 (LQRESERLELMNAELKTQIEELKLERQQL) form a leucine-zipper region. T148 is subject to Phosphothreonine; by MAPK8.

This sequence belongs to the bZIP family. ATF subfamily. In terms of assembly, forms a homodimer or heterodimer with JUN, JUNB, JUND, CEBPG and ATF2 thereby inhibiting transactivation by JUN, ATF2 and CEBPG. Binds multiple DNA elements such as cAMP-response element (CRE) and TPA response element (TRE) either as homodimer or heterodimer. Interacts with IRF2BP1. Phosphorylation of Thr-148 by MAPK8 in response to different stress conditions such as, UV irradiation, oxidatives stress and anisomycin treatments. In terms of processing, polyubiquitinated; probably by IRF2BP1. As to expression, ubiquitously expressed in all adult tissues tested as well in embryos.

The protein resides in the nucleus. Its function is as follows. Component of the AP-1 transcription factor that represses transactivation mediated by the Jun family of proteins. Involved in a variety of transcriptional responses associated with AP-1, such as UV-induced apoptosis, cell differentiation, tumorigenesis and antitumogeneris. Can also function as a repressor by recruiting histone deacetylase 3/HDAC3 to the promoter region of JUN. May control transcription via direct regulation of the modification of histones and the assembly of chromatin. This Mus musculus (Mouse) protein is Jun dimerization protein 2 (Jdp2).